Reading from the N-terminus, the 405-residue chain is Caspase-1 (405 aa).

Residues 1–91 enclose the CARD domain; that stretch reads MADKVLKEKR…HLAETLRLSS (91 aa). Residues 1 to 119 constitute a propeptide that is removed on maturation; that stretch reads MADKVLKEKR…SSPALQAMPD (119 aa). Active-site residues include His238 and Cys286. A propeptide spanning residues 299-317 is cleaved from the precursor; that stretch reads STGTSGNSSSLAPDDFEDD. Ser303 bears the Phosphoserine mark.

Belongs to the peptidase C14A family. Heterotetramer that consists of two anti-parallel arranged heterodimers, each one formed by a 20 kDa (Caspase-1 subunit p20) and a 10 kDa (Caspase-1 subunit p10) subunit. May be a component of the inflammasome, a protein complex which also includes PYCARD, CARD8 and NLRP2 and whose function would be the activation of pro-inflammatory caspases. Component of the AIM2 PANoptosome complex, a multiprotein complex that drives inflammatory cell death (PANoptosis). Both the p10 and p20 subunits interact with MEFV. Interacts with CARD17P/INCA and CARD18. Interacts with SERPINB1; this interaction regulates CASP1 activity. In terms of assembly, heterotetramer that consists of two anti-parallel arranged heterodimers, each one formed by a 20 kDa (Caspase-1 subunit p20) and a 10 kDa (Caspase-1 subunit p10) subunit. In terms of processing, the two subunits are derived from the precursor sequence by an autocatalytic mechanism. Post-translationally, ubiquitinated via 'Lys-11'-linked polyubiquitination. Deubiquitinated by USP8.

The protein resides in the cytoplasm. The protein localises to the cell membrane. It carries out the reaction Strict requirement for an Asp residue at position P1 and has a preferred cleavage sequence of Tyr-Val-Ala-Asp-|-.. In terms of biological role, thiol protease involved in a variety of inflammatory processes by proteolytically cleaving other proteins, such as the precursors of the inflammatory cytokines interleukin-1 beta (IL1B) and interleukin 18 (IL18) as well as the pyroptosis inducer Gasdermin-D (GSDMD), into active mature peptides. Plays a key role in cell immunity as an inflammatory response initiator: once activated through formation of an inflammasome complex, it initiates a pro-inflammatory response through the cleavage of the two inflammatory cytokines IL1B and IL18, releasing the mature cytokines which are involved in a variety of inflammatory processes. Cleaves a tetrapeptide after an Asp residue at position P1. Also initiates pyroptosis, a programmed lytic cell death pathway, through cleavage of GSDMD. In contrast to cleavage of interleukin IL1B, recognition and cleavage of GSDMD is not strictly dependent on the consensus cleavage site but depends on an exosite interface on CASP1 that recognizes and binds the Gasdermin-D, C-terminal (GSDMD-CT) part. Cleaves and activates CASP7 in response to bacterial infection, promoting plasma membrane repair. Upon inflammasome activation, during DNA virus infection but not RNA virus challenge, controls antiviral immunity through the cleavage of CGAS, rendering it inactive. In apoptotic cells, cleaves SPHK2 which is released from cells and remains enzymatically active extracellularly. This Equus caballus (Horse) protein is Caspase-1 (CASP1).